The primary structure comprises 495 residues: MAFSLVSILLSIALAWYVGYIINQLTSRNSKRPPIVFHWIPFVGSAVAYGMDPYVFFRECRAKYGDVFTFVCMGRKMTAFLGVQGNDFLFNGKLADLNAEEAYSHLTTPVFGKDVVYDIPNHVFMEHKKFIKSGLGFSQFRSYVPLILNEMDAFLSTSPDFGPGKEGVADLLKTMPVMTIYTASRTLQGAEVRKGFDAGFADLYHDLDQGFSPVNFVFPWLPLPRNRRRDRAHKIMQKTYLKIIKDRRSSTENPGTDMIWTLMSCKYRDGRPLKEHEIAGMMIALLMAGQHTSAATIVWVLALLGSKPEIIEMLWEEQKRVVGENLELKFDQYKDMPLLNYVIQETLRLHPPIHSHMRKVKRDLPVPGSKIVIPANNYLLAAPGLTATEEEYFTHATDFDPKRWNDRVNEDENAEQIDYGYGLVTKGAASPYLPFGAGRHRCIGEQFAYMHLSTIISKFVHDYTWTLIGKVPNVDYSSMVALPLGPVKIAWKRRN.

Residues 2–22 (AFSLVSILLSIALAWYVGYII) form a helical membrane-spanning segment. Heme is bound at residue C442.

Belongs to the cytochrome P450 family. In terms of assembly, interacts with dap1. Heme serves as cofactor.

It is found in the endoplasmic reticulum. It localises to the membrane. The catalysed reaction is a 14alpha-methyl steroid + 3 reduced [NADPH--hemoprotein reductase] + 3 O2 = a Delta(14) steroid + formate + 3 oxidized [NADPH--hemoprotein reductase] + 4 H2O + 4 H(+). It catalyses the reaction a 14alpha-methyl steroid + reduced [NADPH--hemoprotein reductase] + O2 = a 14alpha-hydroxymethyl steroid + oxidized [NADPH--hemoprotein reductase] + H2O + H(+). The enzyme catalyses a 14alpha-hydroxymethyl steroid + reduced [NADPH--hemoprotein reductase] + O2 = a 14alpha-formyl steroid + oxidized [NADPH--hemoprotein reductase] + 2 H2O + H(+). It carries out the reaction a 14alpha-formyl steroid + reduced [NADPH--hemoprotein reductase] + O2 = a Delta(14) steroid + formate + oxidized [NADPH--hemoprotein reductase] + H2O + 2 H(+). The catalysed reaction is lanosterol + 3 reduced [NADPH--hemoprotein reductase] + 3 O2 = 4,4-dimethyl-5alpha-cholesta-8,14,24-trien-3beta-ol + formate + 3 oxidized [NADPH--hemoprotein reductase] + 4 H2O + 4 H(+). It catalyses the reaction lanosterol + reduced [NADPH--hemoprotein reductase] + O2 = 32-hydroxylanosterol + oxidized [NADPH--hemoprotein reductase] + H2O + H(+). The enzyme catalyses 32-hydroxylanosterol + reduced [NADPH--hemoprotein reductase] + O2 = 32-oxolanosterol + oxidized [NADPH--hemoprotein reductase] + 2 H2O + H(+). It carries out the reaction 32-oxolanosterol + reduced [NADPH--hemoprotein reductase] + O2 = 4,4-dimethyl-5alpha-cholesta-8,14,24-trien-3beta-ol + formate + oxidized [NADPH--hemoprotein reductase] + H2O + 2 H(+). The catalysed reaction is eburicol + 3 reduced [NADPH--hemoprotein reductase] + 3 O2 = 14-demethyleburicol + formate + 3 oxidized [NADPH--hemoprotein reductase] + 4 H2O + 4 H(+). It catalyses the reaction eburicol + reduced [NADPH--hemoprotein reductase] + O2 = 32-hydroxyeburicol + oxidized [NADPH--hemoprotein reductase] + H2O + H(+). The enzyme catalyses 32-hydroxyeburicol + reduced [NADPH--hemoprotein reductase] + O2 = 32-oxoeburicol + oxidized [NADPH--hemoprotein reductase] + 2 H2O + H(+). It carries out the reaction 32-oxoeburicol + reduced [NADPH--hemoprotein reductase] + O2 = 14-demethyleburicol + formate + oxidized [NADPH--hemoprotein reductase] + H2O + 2 H(+). The protein operates within steroid biosynthesis; zymosterol biosynthesis; zymosterol from lanosterol: step 1/6. It participates in steroid metabolism; ergosterol biosynthesis. Sterol 14alpha-demethylase that plays a critical role in the third module of ergosterol biosynthesis pathway, being ergosterol the major sterol component in fungal membranes that participates in a variety of functions. The third module or late pathway involves the ergosterol synthesis itself through consecutive reactions that mainly occur in the endoplasmic reticulum (ER) membrane. In filamentous fungi, during the initial step of this module, lanosterol (lanosta-8,24-dien-3beta-ol) can be metabolized to eburicol. Sterol 14alpha-demethylase catalyzes the three-step oxidative removal of the 14alpha-methyl group (C-32) of both these sterols in the form of formate, and converts eburicol and lanosterol to 14-demethyleburicol (4,4,24-trimethylergosta-8,14,24(28)-trienol) and 4,4-dimethyl-5alpha-cholesta-8,14,24-trien-3beta-ol, respectively, which are further metabolized by other enzymes in the pathway to ergosterol. Can also use substrates not intrinsic to fungi, such as 24,25-dihydrolanosterol (DHL), producing 4,4-dimethyl-8,14-cholestadien-3-beta-ol, but at lower rates than the endogenous substrates. This chain is Lanosterol 14-alpha demethylase erg11, found in Schizosaccharomyces pombe (strain 972 / ATCC 24843) (Fission yeast).